The chain runs to 151 residues: uncharacterized protein (151 aa).

A Response regulatory domain is found at 2–133 (KTLIVEDNPK…VFVEAVHYSQ (132 aa)). Asp-53 carries the post-translational modification 4-aspartylphosphate.

This is an uncharacterized protein from Sinorhizobium fredii (strain NBRC 101917 / NGR234).